Reading from the N-terminus, the 141-residue chain is Large ribosomal subunit protein uL13 (141 aa).

Belongs to the universal ribosomal protein uL13 family. In terms of assembly, part of the 50S ribosomal subunit.

Functionally, this protein is one of the early assembly proteins of the 50S ribosomal subunit, although it is not seen to bind rRNA by itself. It is important during the early stages of 50S assembly. This chain is Large ribosomal subunit protein uL13, found in Deinococcus deserti (strain DSM 17065 / CIP 109153 / LMG 22923 / VCD115).